The sequence spans 350 residues: Carbamoyl dehydratase HypE (350 aa).

C350 carries the post-translational modification S-carbamoylcysteine. An S-cyanocysteine modification is found at C350.

This sequence belongs to the HypE family. Modified by HypF, which adds a carboxamido group to the thiolate of the C-terminal cysteine, yielding a protein-S-carboxamide. The carboxamido group is then dehydrated by HypE itself to yield a protein-thiocyanate.

It catalyses the reaction C-terminal S-carboxamide-L-cysteinyl-[HypE protein] + ATP = C-terminal S-cyanate-L-cysteinyl-[HypE protein] + ADP + phosphate + H(+). The protein operates within protein modification; [NiFe] hydrogenase maturation. In terms of biological role, involved in the maturation of [NiFe] hydrogenases. Along with HypF, it catalyzes the synthesis of the CN ligands of the active site iron of [NiFe]-hydrogenases. HypE catalyzes the ATP-dependent dehydration of the carboxamido group attached to its C-terminal cysteine to a cyano group. This Rhizobium leguminosarum bv. viciae protein is Carbamoyl dehydratase HypE.